Here is a 192-residue protein sequence, read N- to C-terminus: Elongation factor P (192 aa).

N6-(3,6-diaminohexanoyl)-5-hydroxylysine is present on Lys-38.

It belongs to the elongation factor P family. In terms of processing, may be beta-lysylated on the epsilon-amino group of Lys-38 by the combined action of EpmA and EpmB, and then hydroxylated on the C5 position of the same residue by EpmC (if this protein is present). Lysylation is critical for the stimulatory effect of EF-P on peptide-bond formation. The lysylation moiety may extend toward the peptidyltransferase center and stabilize the terminal 3-CCA end of the tRNA. Hydroxylation of the C5 position on Lys-38 may allow additional potential stabilizing hydrogen-bond interactions with the P-tRNA.

Its subcellular location is the cytoplasm. Its pathway is protein biosynthesis; polypeptide chain elongation. In terms of biological role, involved in peptide bond synthesis. Alleviates ribosome stalling that occurs when 3 or more consecutive Pro residues or the sequence PPG is present in a protein, possibly by augmenting the peptidyl transferase activity of the ribosome. Modification of Lys-38 is required for alleviation. The polypeptide is Elongation factor P (Mannheimia succiniciproducens (strain KCTC 0769BP / MBEL55E)).